We begin with the raw amino-acid sequence, 324 residues long: Probable pectinesterase A (324 aa).

A signal peptide spans 1 to 19 (MHGSLLKLALLSFSLASSA). Residue Q142 participates in substrate binding. D165 acts as the Proton donor in catalysis. D186 serves as the catalytic Nucleophile. Residues R246 and W248 each coordinate substrate. A glycan (N-linked (GlcNAc...) asparagine) is linked at N285.

This sequence belongs to the pectinesterase family.

The protein localises to the secreted. It catalyses the reaction [(1-&gt;4)-alpha-D-galacturonosyl methyl ester](n) + n H2O = [(1-&gt;4)-alpha-D-galacturonosyl](n) + n methanol + n H(+). It functions in the pathway glycan metabolism; pectin degradation; 2-dehydro-3-deoxy-D-gluconate from pectin: step 1/5. Functionally, involved in maceration and soft-rotting of plant tissue. In Aspergillus flavus (strain ATCC 200026 / FGSC A1120 / IAM 13836 / NRRL 3357 / JCM 12722 / SRRC 167), this protein is Probable pectinesterase A (pmeA).